Consider the following 35-residue polypeptide: Photosystem II reaction center protein T (35 aa).

A helical membrane pass occupies residues 3–23 (ALVYTFLLVGTLGIIFFAIFF).

The protein belongs to the PsbT family. PSII is composed of 1 copy each of membrane proteins PsbA, PsbB, PsbC, PsbD, PsbE, PsbF, PsbH, PsbI, PsbJ, PsbK, PsbL, PsbM, PsbT, PsbY, PsbZ, Psb30/Ycf12, at least 3 peripheral proteins of the oxygen-evolving complex and a large number of cofactors. It forms dimeric complexes.

The protein localises to the plastid. The protein resides in the chloroplast thylakoid membrane. Its function is as follows. Found at the monomer-monomer interface of the photosystem II (PS II) dimer, plays a role in assembly and dimerization of PSII. PSII is a light-driven water plastoquinone oxidoreductase, using light energy to abstract electrons from H(2)O, generating a proton gradient subsequently used for ATP formation. This chain is Photosystem II reaction center protein T, found in Marchantia polymorpha (Common liverwort).